We begin with the raw amino-acid sequence, 39 residues long: Photosystem II reaction center protein J (39 aa).

Residues 9 to 29 (LWLVATVGGIAAITVLGIFIY) traverse the membrane as a helical segment.

It belongs to the PsbJ family. In terms of assembly, PSII is composed of 1 copy each of membrane proteins PsbA, PsbB, PsbC, PsbD, PsbE, PsbF, PsbH, PsbI, PsbJ, PsbK, PsbL, PsbM, PsbT, PsbX, PsbY, PsbZ, Psb30/Ycf12, at least 3 peripheral proteins of the oxygen-evolving complex and a large number of cofactors. It forms dimeric complexes.

It localises to the plastid. It is found in the chloroplast thylakoid membrane. Its function is as follows. One of the components of the core complex of photosystem II (PSII). PSII is a light-driven water:plastoquinone oxidoreductase that uses light energy to abstract electrons from H(2)O, generating O(2) and a proton gradient subsequently used for ATP formation. It consists of a core antenna complex that captures photons, and an electron transfer chain that converts photonic excitation into a charge separation. This chain is Photosystem II reaction center protein J, found in Pyropia yezoensis (Susabi-nori).